Consider the following 557-residue polypeptide: Urocanate hydratase (557 aa).

NAD(+) is bound by residues 53-54 (GG), Q131, 177-179 (GMG), D197, R202, 243-244 (NA), 264-268 (QTSAH), 274-275 (YL), and Y323. The active site involves C411. G493 contributes to the NAD(+) binding site.

This sequence belongs to the urocanase family. Requires NAD(+) as cofactor.

The protein resides in the cytoplasm. It carries out the reaction 4-imidazolone-5-propanoate = trans-urocanate + H2O. It participates in amino-acid degradation; L-histidine degradation into L-glutamate; N-formimidoyl-L-glutamate from L-histidine: step 2/3. In terms of biological role, catalyzes the conversion of urocanate to 4-imidazolone-5-propionate. The chain is Urocanate hydratase from Hahella chejuensis (strain KCTC 2396).